A 539-amino-acid chain; its full sequence is Phosphoenolpyruvate carboxykinase (ATP) (539 aa).

Residues Arg-59, Tyr-200, and Lys-206 each contribute to the substrate site. ATP is bound by residues Lys-206, His-225, and 242–250 (GLSGTGKTT). Mn(2+) is bound by residues Lys-206 and His-225. Position 263 (Asp-263) interacts with Mn(2+). ATP contacts are provided by residues Glu-291, Arg-327, 447 to 448 (RI), and Thr-453. Position 327 (Arg-327) interacts with substrate.

Belongs to the phosphoenolpyruvate carboxykinase (ATP) family. Mn(2+) serves as cofactor.

The protein localises to the cytoplasm. It catalyses the reaction oxaloacetate + ATP = phosphoenolpyruvate + ADP + CO2. It functions in the pathway carbohydrate biosynthesis; gluconeogenesis. Involved in the gluconeogenesis. Catalyzes the conversion of oxaloacetate (OAA) to phosphoenolpyruvate (PEP) through direct phosphoryl transfer between the nucleoside triphosphate and OAA. This Selenomonas ruminantium protein is Phosphoenolpyruvate carboxykinase (ATP).